We begin with the raw amino-acid sequence, 46 residues long: AICKKPSKFFKGACGRDADCEKACDQENWPGGVCVPFLRCECQRSC.

4 disulfides stabilise this stretch: Cys-3-Cys-46, Cys-14-Cys-34, Cys-20-Cys-40, and Cys-24-Cys-42.

In terms of tissue distribution, leaves and flowers.

Its function is as follows. Strong inhibiting activity against C.beticola and other filamentous fungi. Little or no effect against bacteria. This is Defensin-like protein AX1 from Beta vulgaris (Sugar beet).